The following is a 293-amino-acid chain: 4-hydroxybenzoate octaprenyltransferase (293 aa).

7 helical membrane-spanning segments follow: residues 25-45 (IGNF…AKGL), 48-68 (LKVL…GCVI), 101-121 (LFVV…PLTI), 142-162 (HFPQ…AFAA), 165-185 (GAVA…ATIY), 223-243 (VMLA…FWYL), and 271-291 (FLNN…DLHL).

Belongs to the UbiA prenyltransferase family. Mg(2+) serves as cofactor.

It localises to the cell inner membrane. It catalyses the reaction all-trans-octaprenyl diphosphate + 4-hydroxybenzoate = 4-hydroxy-3-(all-trans-octaprenyl)benzoate + diphosphate. It functions in the pathway cofactor biosynthesis; ubiquinone biosynthesis. Catalyzes the prenylation of para-hydroxybenzoate (PHB) with an all-trans polyprenyl group. Mediates the second step in the final reaction sequence of ubiquinone-8 (UQ-8) biosynthesis, which is the condensation of the polyisoprenoid side chain with PHB, generating the first membrane-bound Q intermediate 3-octaprenyl-4-hydroxybenzoate. The protein is 4-hydroxybenzoate octaprenyltransferase of Alkalilimnicola ehrlichii (strain ATCC BAA-1101 / DSM 17681 / MLHE-1).